Reading from the N-terminus, the 364-residue chain is Protein MGF 360-1L (364 aa).

It belongs to the asfivirus MGF 360 family.

In terms of biological role, plays a role in virus cell tropism, and may be required for efficient virus replication in macrophages. The polypeptide is Protein MGF 360-1L (Ornithodoros (relapsing fever ticks)).